Consider the following 362-residue polypeptide: Very-long-chain (3R)-3-hydroxyacyl-CoA dehydratase (362 aa).

At 1 to 149 the chain is on the cytoplasmic side; sequence MADCSLRPHV…DPFKHLKKGY (149 aa). The region spanning 5–94 is the CS domain; sequence SLRPHVHWAQ…KESSWWERLT (90 aa). Residues 111–135 adopt a coiled-coil conformation; that stretch reads LDESDAEMELKEKEEEKINKMKIES. Residues 150-170 form a helical membrane-spanning segment; that stretch reads LIMYNLVQFLGFSWIFVNMTV. Topologically, residues 171 to 189 are lumenal; that stretch reads RLFILGKDSFYDTFHTIAD. A helical transmembrane segment spans residues 190–210; it reads MMYFCQTLALMEILNSLIGLV. At 211-212 the chain is on the cytoplasmic side; the sequence is RS. Residues 213 to 233 traverse the membrane as a helical segment; the sequence is PLIPAVIQVFGRNFILFVVLG. Over 234 to 242 the chain is Lumenal; that stretch reads SLEEMQSKA. The chain crosses the membrane as a helical span at residues 243–263; sequence VVFFLFYFWSIIELFRYPYYM. Topologically, residues 264–282 are cytoplasmic; it reads LSCMGIEWKPLTWLRYTSW. A helical transmembrane segment spans residues 283 to 303; that stretch reads IPLYPLGGLAEAVCLIQSIPI. Catalysis depends on residues Y286 and E293. Residues 304-319 lie on the Lumenal side of the membrane; the sequence is FSETGKFSLGLPNPLN. A helical membrane pass occupies residues 320 to 340; the sequence is VTIQFSFLLQMYLIALFLGLF. Residues 341–362 are Cytoplasmic-facing; that stretch reads VNFRYLYKQRKQHLGPKKRKMK.

This sequence belongs to the very long-chain fatty acids dehydratase HACD family.

The protein localises to the endoplasmic reticulum membrane. The catalysed reaction is a very-long-chain (3R)-3-hydroxyacyl-CoA = a very-long-chain (2E)-enoyl-CoA + H2O. It carries out the reaction (3R)-hydroxyhexadecanoyl-CoA = (2E)-hexadecenoyl-CoA + H2O. Its pathway is lipid metabolism; fatty acid biosynthesis. Functionally, catalyzes the third of the four reactions of the long-chain fatty acids elongation cycle. This endoplasmic reticulum-bound enzymatic process, allows the addition of two carbons to the chain of long- and very long-chain fatty acids/VLCFAs per cycle. This enzyme catalyzes the dehydration of the 3-hydroxyacyl-CoA intermediate into trans-2,3-enoyl-CoA, within each cycle of fatty acid elongation. Thereby, it participates in the production of VLCFAs of different chain lengths that are involved in multiple biological processes as precursors of membrane lipids and lipid mediators. Involved in Rac1-signaling pathways leading to the modulation of gene expression. The polypeptide is Very-long-chain (3R)-3-hydroxyacyl-CoA dehydratase (Gallus gallus (Chicken)).